The chain runs to 396 residues: Odorant receptor 49a (396 aa).

The Cytoplasmic segment spans residues 1–6 (MEKLRS). The helical transmembrane segment at 7–27 (YEDFIFMANMMFKTLGYDLFH) threads the bilayer. The Extracellular portion of the chain corresponds to 28-34 (TPKPWWR). The helical transmembrane segment at 35–55 (YLLVRGYFVLCTISNFYEASM) threads the bilayer. At 56–70 (VTTRIIEWESLAGSP) the chain is on the cytoplasmic side. A helical transmembrane segment spans residues 71-91 (SKIMRQGLHFFYMLSSQLKFI). Residues 92 to 141 (TFMINRKRLLQLSHRLKELYPHKEQNQRKYEVNKYYLSCSTRNVLYVYYF) are Extracellular-facing. A helical transmembrane segment spans residues 142 to 162 (VMVVMALEPLVQSCIMYLIGF). Topologically, residues 163–209 (GKADFTYKRIFPTRLTFDSEKPLGYVLAYVIDFTYSQFIVNVSLGTD) are cytoplasmic. The helical transmembrane segment at 210-230 (LWMMCVSSQISMHLGYLANML) threads the bilayer. At 231–266 (ASIRPSPETEQQDCDFLASIIKRHQLMIRLQKDVNY) the chain is on the extracellular side. A helical transmembrane segment spans residues 267-287 (VFGLLLASNLFTTSCLLCCMA). At 288–296 (YYTVVEGFN) the chain is on the cytoplasmic side. A helical transmembrane segment spans residues 297–317 (WEGISYMMLFASVAAQFYVVS). The Extracellular portion of the chain corresponds to 318-396 (SHGQMLIDLS…FAVIRQTVEK (79 aa)).

The protein belongs to the insect chemoreceptor superfamily. Heteromeric odorant receptor channel (TC 1.A.69) family. Or49a subfamily. Interacts with Orco. Complexes exist early in the endomembrane system in olfactory sensory neurons (OSNs), coupling these complexes to the conserved ciliary trafficking pathway.

The protein resides in the cell membrane. Its function is as follows. Odorant receptor which mediates acceptance or avoidance behavior, depending on its substrates. The odorant receptor repertoire encodes a large collection of odor stimuli that vary widely in identity, intensity, and duration. May form a complex with Orco to form odorant-sensing units, providing sensitive and prolonged odorant signaling and calcium permeability. Involved in the behavioral responses to butanol and 2-heptanone. The polypeptide is Odorant receptor 49a (Or49a) (Drosophila melanogaster (Fruit fly)).